The sequence spans 336 residues: NmrA-like family domain-containing oxidoreductase malD (336 aa).

Residues 12 to 17, 40 to 44, 61 to 62, 82 to 84, Lys140, and 163 to 166 each bind NADP(+); these read GGTGNQ, RDPTS, DG, TNS, and FMEA.

This sequence belongs to the NmrA-type oxidoreductase family.

Functionally, nmrA-like family domain-containing oxidoreductase; part of the gene cluster that mediates the biosynthesis of malbrancheamide, a dichlorinated fungal indole alkaloid that belongs to a family of natural products containing a characteristic bicyclo[2.2.2]diazaoctane core. The first step of malbrancheamide biosynthesis involves coupling of L-proline and L-tryptophan by malG, a bimodular NRPS, to produce L-Pro-L-Trp aldehyde through reductive offloading. This compound undergoes spontaneous cyclization and dehydration to give a dienamine which is reverse prenylated at C-2 by malE. The other prenyltransferase present in the cluster, malB, displays modest activity, suggesting that may be a redundant gene in the pathway. Subsequently, a [4+2] Diels-Alder cyclo-addition catalyzed by the bifunctional enzyme malC forms the characteristic bicyclo[2.2.2]diazaoctane ring of premalbrancheamid. Finally, the flavin-dependent halogenase malA catalyzes the iterative dichlorination of the indole ring of premalbrancheamide to yield C-9 monochlorinated malbrancheamide B, C-8 monochlorinated isomalbrancheamide B, and dichlorinated malbrancheamide. MalA is also able to brominate premalbrancheamide at C-9 to yield malbrancheamide C, and, to a lesser extend, at C-8 to yield isomalbrancheamide C. Finally, malA can brominate C-9 monochlorinated malbrancheamide B at C-8 to yield malbrancheamide D, or C-8 monochlorinated isomalbrancheamide B at C-9 to produce isomalbrancheamide D. The sequence is that of NmrA-like family domain-containing oxidoreductase malD from Malbranchea aurantiaca.